The chain runs to 108 residues: uncharacterized protein (108 aa).

This is an uncharacterized protein from Archaeoglobus fulgidus (strain ATCC 49558 / DSM 4304 / JCM 9628 / NBRC 100126 / VC-16).